Here is a 177-residue protein sequence, read N- to C-terminus: Adenine phosphoribosyltransferase (177 aa).

This sequence belongs to the purine/pyrimidine phosphoribosyltransferase family. As to quaternary structure, homodimer.

It localises to the cytoplasm. The enzyme catalyses AMP + diphosphate = 5-phospho-alpha-D-ribose 1-diphosphate + adenine. Its pathway is purine metabolism; AMP biosynthesis via salvage pathway; AMP from adenine: step 1/1. Its function is as follows. Catalyzes a salvage reaction resulting in the formation of AMP, that is energically less costly than de novo synthesis. In Acidothermus cellulolyticus (strain ATCC 43068 / DSM 8971 / 11B), this protein is Adenine phosphoribosyltransferase.